The following is a 191-amino-acid chain: Molybdenum cofactor guanylyltransferase (191 aa).

Residues 11-13, Lys-23, Asp-66, and Asp-97 contribute to the GTP site; that span reads LCG. Asp-97 is a Mg(2+) binding site.

It belongs to the MobA family. As to quaternary structure, monomer. Mg(2+) is required as a cofactor.

It is found in the cytoplasm. The enzyme catalyses Mo-molybdopterin + GTP + H(+) = Mo-molybdopterin guanine dinucleotide + diphosphate. Transfers a GMP moiety from GTP to Mo-molybdopterin (Mo-MPT) cofactor (Moco or molybdenum cofactor) to form Mo-molybdopterin guanine dinucleotide (Mo-MGD) cofactor. This chain is Molybdenum cofactor guanylyltransferase, found in Campylobacter jejuni subsp. jejuni serotype O:2 (strain ATCC 700819 / NCTC 11168).